The chain runs to 631 residues: Dolichyl-diphosphooligosaccharide--protein glycosyltransferase subunit 2 (631 aa).

Residues 1–22 form the signal peptide; the sequence is MALPGSSTVFLLALTIIASTQA. Residues 23–540 lie on the Lumenal side of the membrane; the sequence is LTPTHYLTKH…REPEKRPPTV (518 aa). N-linked (GlcNAc...) asparagine glycosylation is present at Asn-106. Lys-154 participates in a covalent cross-link: Glycyl lysine isopeptide (Lys-Gly) (interchain with G-Cter in ubiquitin). Residues 541–561 traverse the membrane as a helical segment; sequence VSNTFTALILSPLLLLFALWI. Over 562 to 571 the chain is Cytoplasmic; the sequence is RIGANVSNFT. The helical transmembrane segment at 572–592 threads the bilayer; that stretch reads FAPSTIVFHLGHAAMLGLMYV. At 593-596 the chain is on the lumenal side; the sequence is YWTQ. Residues 597 to 617 traverse the membrane as a helical segment; that stretch reads LNMFQTLKYLAILGSVTFLAG. The Cytoplasmic portion of the chain corresponds to 618–631; the sequence is NRMLAQQAIKRTAH.

It belongs to the SWP1 family. In terms of assembly, component of the oligosaccharyltransferase (OST) complex. OST exists in two different complex forms which contain common core subunits RPN1, RPN2, OST48, OST4, DAD1 and TMEM258, either STT3A or STT3B as catalytic subunits, and form-specific accessory subunits. STT3A complex assembly occurs through the formation of 3 subcomplexes. Subcomplex 1 contains RPN1 and TMEM258, subcomplex 2 contains the STT3A-specific subunits STT3A, DC2/OSTC, and KCP2 as well as the core subunit OST4, and subcomplex 3 contains RPN2, DAD1, and OST48. The STT3A complex can form stable complexes with the Sec61 complex or with both the Sec61 and TRAP complexes. Interacts with DDI2. Interacts with TMEM35A/NACHO.

It is found in the endoplasmic reticulum. It localises to the endoplasmic reticulum membrane. Its pathway is protein modification; protein glycosylation. Functionally, subunit of the oligosaccharyl transferase (OST) complex that catalyzes the initial transfer of a defined glycan (Glc(3)Man(9)GlcNAc(2) in eukaryotes) from the lipid carrier dolichol-pyrophosphate to an asparagine residue within an Asn-X-Ser/Thr consensus motif in nascent polypeptide chains, the first step in protein N-glycosylation. N-glycosylation occurs cotranslationally and the complex associates with the Sec61 complex at the channel-forming translocon complex that mediates protein translocation across the endoplasmic reticulum (ER). All subunits are required for a maximal enzyme activity. In Bos taurus (Bovine), this protein is Dolichyl-diphosphooligosaccharide--protein glycosyltransferase subunit 2.